We begin with the raw amino-acid sequence, 275 residues long: Structure-specific endonuclease subunit SLX1 (275 aa).

One can recognise a GIY-YIG domain in the interval 12–95; the sequence is RFFGVYLLYC…QHPHASRRLA (84 aa). Residues 148–161 are compositionally biased toward pro residues; that stretch reads HVPLAFGPPPPQAP. The tract at residues 148–179 is disordered; it reads HVPLAFGPPPPQAPAPRRRAGPFDDAEPEPDQ. An SLX1-type zinc finger spans residues 186-238; it reads CSLCAQTIQDEEGPLCCPHPGCLLRAHVICLAEEFLQEEPGQLLPLEGQCPCC.

This sequence belongs to the SLX1 family. In terms of assembly, forms a heterodimer with SLX4. Requires a divalent metal cation as cofactor.

Its subcellular location is the nucleus. Functionally, catalytic subunit of the SLX1-SLX4 structure-specific endonuclease that resolves DNA secondary structures generated during DNA repair and recombination. Has endonuclease activity towards branched DNA substrates, introducing single-strand cuts in duplex DNA close to junctions with ss-DNA. Has a preference for 5'-flap structures, and promotes symmetrical cleavage of static and migrating Holliday junctions (HJs). Resolves HJs by generating two pairs of ligatable, nicked duplex products. This chain is Structure-specific endonuclease subunit SLX1, found in Homo sapiens (Human).